The sequence spans 241 residues: tRNA pseudouridine synthase A (241 aa).

Residue aspartate 52 is the Nucleophile of the active site. Tyrosine 111 is a substrate binding site.

This sequence belongs to the tRNA pseudouridine synthase TruA family. In terms of assembly, homodimer.

It carries out the reaction uridine(38/39/40) in tRNA = pseudouridine(38/39/40) in tRNA. In terms of biological role, formation of pseudouridine at positions 38, 39 and 40 in the anticodon stem and loop of transfer RNAs. The chain is tRNA pseudouridine synthase A from Ureaplasma parvum serovar 3 (strain ATCC 27815 / 27 / NCTC 11736).